We begin with the raw amino-acid sequence, 1341 residues long: WASH complex subunit 2A (1341 aa).

Residues 1-220 are sufficient for interaction with WASHC3, WASHC4 and WASHC5; required for interaction with WASHC1; that stretch reads MMNRTTPDQE…VGSDRGSIVD (220 aa). The span at 202-214 shows a compositional bias: low complexity; the sequence is GELSSEEGSVGSD. The disordered stretch occupies residues 202–405; it reads GELSSEEGSV…SSSKPGKKIP (204 aa). Residues 220–232 show a composition bias toward acidic residues; it reads DTEEEKEEEESDE. The span at 233 to 244 shows a compositional bias: basic and acidic residues; that stretch reads DFAHHSDNEQNR. Composition is skewed to acidic residues over residues 250 to 259 and 266 to 276; these read SDEEEDDDGC and EKEEEDIEDIE. Positions 293–307 are enriched in basic and acidic residues; it reads LAARIKGDAVGRVDE. A compositionally biased stretch (gly residues) spans 355–366; the sequence is GSGGGLFSGGKG. Residues 356–600 form a sufficient for interaction with CCDC93 region; the sequence is SGGGLFSGGK…QTLCLQAQRE (245 aa). Positions 356-742 are required for interaction with CCDC22 and VPS35L; sequence SGGGLFSGGK…KEAQLGVKSV (387 aa). Positions 357 to 1341 are interaction with VPS35; the sequence is GGGLFSGGKG…DDPLNAFGGQ (985 aa). 4 consecutive short sequence motifs (LFa) follow at residues 367–378, 411–419, 450–463, and 482–491; these read LFDDEDEESDLF, VFLGDTDVF, LFDD…DDFF, and IFGDEEGDLF. A disordered region spans residues 422–554; it reads ASVPSMKEPQ…EDLFSSQSAS (133 aa). The span at 451-462 shows a compositional bias: acidic residues; the sequence is FDDDDGDDDDDF. The segment covering 507-517 has biased composition (basic and acidic residues); it reads DENKARAEKKV. Residues 518–536 are compositionally biased toward polar residues; that stretch reads TLSSSKNLKPSSETKTQKG. 3 consecutive short sequence motifs (LFa) follow at residues 537–548, 572–583, and 617–629; these read LFSDEEDSEDLF, LFDDEDEEDNLF, and LFSS…WNIP. S539 is subject to Phosphoserine. 3 disordered regions span residues 621-664, 696-739, and 751-838; these read DEED…KTSL, DSGG…QLGV, and ESLK…KSTG. A compositionally biased stretch (basic and acidic residues) spans 637–647; that stretch reads SDSRSKGEPRD. 3 consecutive short sequence motifs (LFa) follow at residues 664–674, 690–702, and 726–738; these read LFEEDEEDDLF, LFED…GSLF, and LFSD…AQLG. The span at 751–768 shows a compositional bias: basic and acidic residues; it reads ESLKFGRTDVAESEKEGL. Residues 803 to 817 carry the LFa 11 motif; sequence LFDEEEDKMEDQNII. Over residues 823-834 the composition is skewed to basic and acidic residues; sequence EVGKGRDPDAHP. 3 consecutive short sequence motifs (LFa) follow at residues 839–847, 856–862, and 878–888; these read VFQDEELLF, DPDVDLF, and LFGDDEDDDLF. 2 disordered regions span residues 881-951 and 988-1205; these read DDED…KEPS and FPSS…LEDE. 2 stretches are compositionally biased toward basic and acidic residues: residues 898–911 and 917–931; these read QEKK…HSVD and KHPE…KGIW. Residues 937 to 1341 form an interaction with phospholipids region; the sequence is QDSSGLAPFK…DDPLNAFGGQ (405 aa). The span at 1028–1046 shows a compositional bias: basic residues; sequence NKSRVKMRGKRRPQTRAAR. A required for interaction with F-actin-capping protein subunit alpha (CAPZA1 or CAPZA2 or CAPZA3) region spans residues 1029 to 1047; sequence KSRVKMRGKRRPQTRAARR. Phosphoserine is present on residues S1054 and S1087. The span at 1094 to 1110 shows a compositional bias: low complexity; sequence EALAAAAAPWEGGPVPG. S1114 bears the Phosphoserine mark. 6 short sequence motifs (LFa) span residues 1129–1136, 1171–1185, 1201–1209, 1234–1240, 1262–1270, and 1290–1299; these read LFDSGDIF, MFPA…DDLF, LLEDEDDLF, IFEDDIF, LFDDNIDIF, and IFDDDMDDIF. Residues 1135 to 1145 are compositionally biased toward polar residues; sequence IFSTGTGSQSV. Positions 1302 to 1326 are disordered; that stretch reads GIQAKTTKPKSRSAQAAPEPRFEHK. The LFa 21 signature appears at 1330–1338; the sequence is IFDDPLNAF.

Belongs to the FAM21 family. In terms of assembly, component of the WASH core complex also described as WASH regulatory complex (SHRC) composed of WASH (WASHC1, WASH2P or WASH3P), WASHC2 (WASHC2A or WASHC2C), WASHC3, WASHC4 and WASHC5; in the complex interacts (via N-terminus) directly with WASHC1. The WASH core complex associates with the F-actin-capping protein dimer (formed by CAPZA1, CAPZA2 or CAPZA3 and CAPZB) in a transient or substoichiometric manner which was initially described as WASH complex. Interacts with VPS35; mediates the association with the retromer CSC complex. Interacts with FKBP15. Interacts with CCDC93, CCDC22, VPS35L; indicative for an association of the WASH core complex with the CCC and retriever complexes. Directly interacts with TBC1D23.

It is found in the early endosome membrane. It localises to the cell membrane. In terms of biological role, acts at least in part as component of the WASH core complex whose assembly at the surface of endosomes inhibits WASH nucleation-promoting factor (NPF) activity in recruiting and activating the Arp2/3 complex to induce actin polymerization and is involved in the fission of tubules that serve as transport intermediates during endosome sorting. Mediates the recruitment of the WASH core complex to endosome membranes via binding to phospholipids and VPS35 of the retromer CSC. Mediates the recruitment of the F-actin-capping protein dimer to the WASH core complex probably promoting localized F-actin polymerization needed for vesicle scission. Via its C-terminus binds various phospholipids, most strongly phosphatidylinositol 4-phosphate (PtdIns-(4)P), phosphatidylinositol 5-phosphate (PtdIns-(5)P) and phosphatidylinositol 3,5-bisphosphate (PtdIns-(3,5)P2). Involved in the endosome-to-plasma membrane trafficking and recycling of SNX27-retromer-dependent cargo proteins, such as GLUT1. Required for the association of DNAJC13, ENTR1, ANKRD50 with retromer CSC subunit VPS35. Required for the endosomal recruitment of CCC complex subunits COMMD1 and CCDC93 as well as the retriever complex subunit VPS35L. The protein is WASH complex subunit 2A of Homo sapiens (Human).